A 462-amino-acid polypeptide reads, in one-letter code: Asparagine--tRNA ligase (462 aa).

The protein belongs to the class-II aminoacyl-tRNA synthetase family. As to quaternary structure, homodimer.

It is found in the cytoplasm. The enzyme catalyses tRNA(Asn) + L-asparagine + ATP = L-asparaginyl-tRNA(Asn) + AMP + diphosphate + H(+). The sequence is that of Asparagine--tRNA ligase from Borrelia garinii subsp. bavariensis (strain ATCC BAA-2496 / DSM 23469 / PBi) (Borreliella bavariensis).